Consider the following 320-residue polypeptide: Malate dehydrogenase (320 aa).

Residues 10 to 15 (GSGMIG) and D34 contribute to the NAD(+) site. Substrate is bound by residues R83 and R89. NAD(+) is bound by residues N96 and 119 to 121 (ITN). 2 residues coordinate substrate: N121 and R152. H176 functions as the Proton acceptor in the catalytic mechanism.

It belongs to the LDH/MDH superfamily. MDH type 3 family.

It carries out the reaction (S)-malate + NAD(+) = oxaloacetate + NADH + H(+). Functionally, catalyzes the reversible oxidation of malate to oxaloacetate. This Agrobacterium fabrum (strain C58 / ATCC 33970) (Agrobacterium tumefaciens (strain C58)) protein is Malate dehydrogenase.